A 33-amino-acid polypeptide reads, in one-letter code: Cytochrome b6-f complex subunit 6 (33 aa).

Residues 4-24 (ITIISYFGLLLASIIFTLVLF) form a helical membrane-spanning segment.

It belongs to the PetL family. As to quaternary structure, the 4 large subunits of the cytochrome b6-f complex are cytochrome b6, subunit IV (17 kDa polypeptide, PetD), cytochrome f and the Rieske protein, while the 4 small subunits are PetG, PetL, PetM and PetN. The complex functions as a dimer.

The protein resides in the plastid. Its subcellular location is the chloroplast thylakoid membrane. Component of the cytochrome b6-f complex, which mediates electron transfer between photosystem II (PSII) and photosystem I (PSI), cyclic electron flow around PSI, and state transitions. PetL is important for photoautotrophic growth as well as for electron transfer efficiency and stability of the cytochrome b6-f complex. In Pinus mugo (Dwarf mountain pine), this protein is Cytochrome b6-f complex subunit 6.